Reading from the N-terminus, the 72-residue chain is Translation initiation factor IF-1 (72 aa).

Residues 1 to 72 enclose the S1-like domain; sequence MAKDDVIEVE…TRGRIVWRGK (72 aa).

The protein belongs to the IF-1 family. Component of the 30S ribosomal translation pre-initiation complex which assembles on the 30S ribosome in the order IF-2 and IF-3, IF-1 and N-formylmethionyl-tRNA(fMet); mRNA recruitment can occur at any time during PIC assembly.

The protein resides in the cytoplasm. Its function is as follows. One of the essential components for the initiation of protein synthesis. Stabilizes the binding of IF-2 and IF-3 on the 30S subunit to which N-formylmethionyl-tRNA(fMet) subsequently binds. Helps modulate mRNA selection, yielding the 30S pre-initiation complex (PIC). Upon addition of the 50S ribosomal subunit IF-1, IF-2 and IF-3 are released leaving the mature 70S translation initiation complex. The chain is Translation initiation factor IF-1 from Caldanaerobacter subterraneus subsp. tengcongensis (strain DSM 15242 / JCM 11007 / NBRC 100824 / MB4) (Thermoanaerobacter tengcongensis).